A 375-amino-acid chain; its full sequence is Palmitoyltransferase PFA4 (375 aa).

Residues 1 to 9 (MAVLVKWPW) lie on the Cytoplasmic side of the membrane. Residues 10–30 (LGVAIPCFLISFTGYFAHFFV) traverse the membrane as a helical segment. Topologically, residues 31–33 (LTN) are lumenal. A helical transmembrane segment spans residues 34-54 (FLSFKELLWFQVSLSMIWISY). Residues 55–121 (WKAIYKNPGR…MNCVGYKNFP (67 aa)) lie on the Cytoplasmic side of the membrane. One can recognise a DHHC domain in the interval 78-128 (NYCTKCETYKPERTHHCKRCNQCVLVMDHHCPWTMNCVGYKNFPHFIRFLF). Cys-108 acts as the S-palmitoyl cysteine intermediate in catalysis. A helical transmembrane segment spans residues 122–142 (HFIRFLFWIIATTGILLHYFV). Residues 143–164 (KRIKFTWVNRYATANLVSKQEL) lie on the Lumenal side of the membrane. A helical transmembrane segment spans residues 165 to 185 (IFLTILTPLDAFILLTISLLF). Residues 186–375 (VRCVKNQIVN…EHFGVDVEVE (190 aa)) are Cytoplasmic-facing.

Belongs to the DHHC palmitoyltransferase family. PFA4 subfamily.

It localises to the endoplasmic reticulum membrane. The enzyme catalyses L-cysteinyl-[protein] + hexadecanoyl-CoA = S-hexadecanoyl-L-cysteinyl-[protein] + CoA. Mediates the reversible addition of palmitate to target proteins, thereby regulating their membrane association and biological function. The protein is Palmitoyltransferase PFA4 of Eremothecium gossypii (strain ATCC 10895 / CBS 109.51 / FGSC 9923 / NRRL Y-1056) (Yeast).